The sequence spans 249 residues: Capsid protein (249 aa).

The interval 1-33 is disordered; it reads MDTDGDNDVFGSGNDTRNNDDKKKEEMKQNISD. The span at 17 to 28 shows a compositional bias: basic and acidic residues; that stretch reads RNNDDKKKEEMK.

The protein belongs to the closteroviridae capsid protein family.

Its subcellular location is the virion. In terms of biological role, capsid protein self-assembles to form filamentous capsids, about 650-850 nm in length. This chain is Capsid protein, found in Beta vulgaris (Sugar beet).